The chain runs to 222 residues: Phosphoenolpyruvate guanylyltransferase (222 aa).

The phosphoenolpyruvate site is built by Thr-134, Gly-150, and Ser-153.

It belongs to the CofC family.

It catalyses the reaction phosphoenolpyruvate + GTP + H(+) = enolpyruvoyl-2-diphospho-5'-guanosine + diphosphate. Its pathway is cofactor biosynthesis; coenzyme F420 biosynthesis. In terms of biological role, guanylyltransferase that catalyzes the activation of phosphoenolpyruvate (PEP) as enolpyruvoyl-2-diphospho-5'-guanosine, via the condensation of PEP with GTP. It is involved in the biosynthesis of coenzyme F420, a hydride carrier cofactor. This is Phosphoenolpyruvate guanylyltransferase from Roseiflexus sp. (strain RS-1).